The following is a 44-amino-acid chain: Thymosin beta-4 (44 aa).

Basic and acidic residues predominate over residues 1–25 (MADKPDMAEIEKFDKSKLKKTETQE). A disordered region spans residues 1–44 (MADKPDMAEIEKFDKSKLKKTETQEKNPLPSKETIEQEKQAGES). An N-acetylalanine modification is found at Ala2. Lys4 is modified (N6-acetyllysine). The residue at position 12 (Lys12) is an N6-acetyllysine; alternate. Lys12 participates in a covalent cross-link: Glycyl lysine isopeptide (Lys-Gly) (interchain with G-Cter in SUMO2); alternate. Position 23 is a phosphothreonine (Thr23). N6-acetyllysine is present on Lys26. Ser31 is modified (phosphoserine). N6-acetyllysine is present on Lys32. Basic and acidic residues predominate over residues 33–44 (ETIEQEKQAGES). Thr34 carries the phosphothreonine modification. N6-acetyllysine is present on Lys39.

This sequence belongs to the thymosin beta family. In terms of tissue distribution, originally found in thymus but it is widely distributed in many tissues.

It localises to the cytoplasm. The protein localises to the cytoskeleton. In terms of biological role, plays an important role in the organization of the cytoskeleton. Binds to and sequesters actin monomers (G actin) and therefore inhibits actin polymerization. Its function is as follows. Seraspenide inhibits the entry of hematopoietic pluripotent stem cells into the S-phase. The sequence is that of Thymosin beta-4 (TMSB4) from Oryctolagus cuniculus (Rabbit).